A 146-amino-acid polypeptide reads, in one-letter code: VQWSSSERSVISGLWAKVNAAEVGPQALARLLVLYPWTQRYFGKFGDLSSNAALMGNANVAKHGKDLLLADLKAVKNMDNVKALYAKXXXXXXXELNVDPDNFTLLGDCLTIVLAMKFGADFTPVDQAVWQKFVAVVVSGLSKQYF.

One can recognise a Globin domain in the interval 2-146 (QWSSSERSVI…VVSGLSKQYF (145 aa)). His63 is a heme b binding site.

Heterotetramer of two alpha and two beta chains. As to expression, red blood cells.

Involved in oxygen transport from the gills to various peripheral tissues. In Ophisurus serpens (Serpent eel), this protein is Hemoglobin cathodic subunit beta.